A 793-amino-acid chain; its full sequence is DnaJ homolog subfamily C member 10 (793 aa).

The signal sequence occupies residues M1–T32. A J domain is found at N35–G100. Residues E130 to H232 form the Thioredoxin 1 domain. A disulfide bond links C158 and C161. 2 trxb regions span residues T235 to F350 and P348 to F463. Thioredoxin domains lie at H454–L553, S557–L665, and A671–Y776. Cysteines 480 and 483 form a disulfide. Residue N530 is glycosylated (N-linked (GlcNAc...) asparagine). 2 cysteine pairs are disulfide-bonded: C588–C591 and C700–C703. The short motif at K790–L793 is the Prevents secretion from ER element.

In terms of assembly, interacts with HSPA5 (via its J domain). Interacts with EDEM1.

It is found in the endoplasmic reticulum lumen. In terms of biological role, endoplasmic reticulum disulfide reductase involved both in the correct folding of proteins and degradation of misfolded proteins. Required for efficient folding of proteins in the endoplasmic reticulum by catalyzing the removal of non-native disulfide bonds formed during the folding of proteins, such as LDLR. Also involved in endoplasmic reticulum-associated degradation (ERAD) by reducing incorrect disulfide bonds in misfolded glycoproteins recognized by EDEM1. Interaction with HSPA5 is required its activity, not for the disulfide reductase activity, but to facilitate the release of DNAJC10 from its substrate. Promotes apoptotic signaling pathway in response to endoplasmic reticulum stress. This chain is DnaJ homolog subfamily C member 10 (Dnajc10), found in Rattus norvegicus (Rat).